A 570-amino-acid polypeptide reads, in one-letter code: Putative diflavin flavoprotein A 6 (570 aa).

The zinc metallo-hydrolase stretch occupies residues 38–231 (AKGTTANSYL…FPTRLYATGH (194 aa)). In terms of domain architecture, Flavodoxin-like spans 260–402 (VALIYASAYG…AGTDFAQALK (143 aa)). Positions 421 to 570 (VGRIVGSLCV…VHHRKSGNHY (150 aa)) are flavodoxin-reductase-like.

The protein in the N-terminal section; belongs to the zinc metallo-hydrolase group 3 family. This sequence in the C-terminal section; belongs to the flavodoxin reductase family. Requires Fe cation as cofactor.

Mediates electron transfer from NADH to oxygen, reducing it to water. This modular protein has 3 redox cofactors, in other organisms the same activity requires 2 or 3 proteins. In Nostoc sp. (strain PCC 7120 / SAG 25.82 / UTEX 2576), this protein is Putative diflavin flavoprotein A 6 (dfa6).